Reading from the N-terminus, the 587-residue chain is Glutamine--tRNA ligase (587 aa).

The 'HIGH' region motif lies at 58–68 (PEPNGYLHIGH). Residues 59-61 (EPN) and 65-71 (HIGHAKS) each bind ATP. Residues aspartate 91 and tyrosine 240 each coordinate L-glutamine. ATP contacts are provided by residues threonine 259 and 294-295 (RL). The 'KMSKS' region signature appears at 301-305 (VTSKR).

The protein belongs to the class-I aminoacyl-tRNA synthetase family. Monomer.

The protein resides in the cytoplasm. The catalysed reaction is tRNA(Gln) + L-glutamine + ATP = L-glutaminyl-tRNA(Gln) + AMP + diphosphate. This is Glutamine--tRNA ligase from Bordetella pertussis (strain Tohama I / ATCC BAA-589 / NCTC 13251).